The following is a 349-amino-acid chain: GDSL esterase/lipase At1g58725 (349 aa).

Positions 1-19 are cleaved as a signal peptide; that stretch reads MKIQILLFALVLIFVEANA. Asn-25 is a glycosylation site (N-linked (GlcNAc...) asparagine). The active-site Nucleophile is the Ser-37. N-linked (GlcNAc...) asparagine glycosylation occurs at Asn-316. Active-site residues include Asp-324 and His-327.

It belongs to the 'GDSL' lipolytic enzyme family.

It localises to the secreted. The chain is GDSL esterase/lipase At1g58725 from Arabidopsis thaliana (Mouse-ear cress).